The sequence spans 236 residues: V-set and transmembrane domain-containing protein 2A (236 aa).

An N-terminal signal peptide occupies residues 1 to 24 (MMGIFLVYVGFVFFSVLYVQQGLS). Residues 27-143 (AKFTEFPRNV…YGELQEHKAQ (117 aa)) form the Ig-like V-type domain. N-linked (GlcNAc...) asparagine glycosylation occurs at Asn35. Cysteines 48 and 127 form a disulfide. A glycan (N-linked (GlcNAc...) asparagine) is linked at Asn175. The span at 184–199 (IHGSANQRTHSTSSPQ) shows a compositional bias: polar residues. A disordered region spans residues 184–206 (IHGSANQRTHSTSSPQVVAKIPK).

Homodimer. In terms of processing, N-glycosylated. N-linked glycosylation is critical for secretion but not for preadipocyte cell differentiation activity.

The protein resides in the secreted. In terms of biological role, plays a role in the regulation of the early stage of white and brown preadipocyte cell differentiation. Promotes adipogenic commitment of preadipocytes by increasing gene expression of the transcription factor PPARG in a BMP4-dependent signaling pathway. The sequence is that of V-set and transmembrane domain-containing protein 2A from Homo sapiens (Human).